The primary structure comprises 247 residues: Chymase (247 aa).

The signal sequence occupies residues 1–19 (MHLLTLHLLLLLLGSSTKA). A propeptide spans 20–21 (GE) (activation peptide). Residues 22 to 245 (IIGGTECIPH…YRPWINKILR (224 aa)) form the Peptidase S1 domain. A disulfide bridge links Cys-51 with Cys-67. His-66 functions as the Charge relay system in the catalytic mechanism. An N-linked (GlcNAc...) asparagine glycan is attached at Asn-80. Asp-110 (charge relay system) is an active-site residue. 2 disulfide bridges follow: Cys-144-Cys-209 and Cys-175-Cys-188. Residue Ser-203 is the Charge relay system of the active site.

The protein belongs to the peptidase S1 family. Granzyme subfamily. Mast cells.

It is found in the secreted. It localises to the cytoplasmic granule. It catalyses the reaction Preferential cleavage: Phe-|-Xaa &gt; Tyr-|-Xaa &gt; Trp-|-Xaa &gt; Leu-|-Xaa.. Major secreted protease of mast cells with suspected roles in vasoactive peptide generation, extracellular matrix degradation, and regulation of gland secretion. The sequence is that of Chymase (Cma1) from Mus musculus (Mouse).